The chain runs to 327 residues: Aspartate carbamoyltransferase catalytic subunit (327 aa).

Residues Arg-54 and Thr-55 each coordinate carbamoyl phosphate. An L-aspartate-binding site is contributed by Lys-82. The carbamoyl phosphate site is built by Arg-104, His-134, and Gln-137. Residues Arg-177 and Arg-232 each contribute to the L-aspartate site. The carbamoyl phosphate site is built by Gly-280 and Pro-281.

The protein belongs to the aspartate/ornithine carbamoyltransferase superfamily. ATCase family. In terms of assembly, heterododecamer (2C3:3R2) of six catalytic PyrB chains organized as two trimers (C3), and six regulatory PyrI chains organized as three dimers (R2).

It catalyses the reaction carbamoyl phosphate + L-aspartate = N-carbamoyl-L-aspartate + phosphate + H(+). The protein operates within pyrimidine metabolism; UMP biosynthesis via de novo pathway; (S)-dihydroorotate from bicarbonate: step 2/3. Functionally, catalyzes the condensation of carbamoyl phosphate and aspartate to form carbamoyl aspartate and inorganic phosphate, the committed step in the de novo pyrimidine nucleotide biosynthesis pathway. In Micrococcus luteus (strain ATCC 4698 / DSM 20030 / JCM 1464 / CCM 169 / CCUG 5858 / IAM 1056 / NBRC 3333 / NCIMB 9278 / NCTC 2665 / VKM Ac-2230) (Micrococcus lysodeikticus), this protein is Aspartate carbamoyltransferase catalytic subunit.